A 426-amino-acid polypeptide reads, in one-letter code: Glutamate-1-semialdehyde 2,1-aminomutase (426 aa).

K265 is subject to N6-(pyridoxal phosphate)lysine.

Belongs to the class-III pyridoxal-phosphate-dependent aminotransferase family. HemL subfamily. In terms of assembly, homodimer. It depends on pyridoxal 5'-phosphate as a cofactor.

The protein resides in the cytoplasm. It carries out the reaction (S)-4-amino-5-oxopentanoate = 5-aminolevulinate. It functions in the pathway porphyrin-containing compound metabolism; protoporphyrin-IX biosynthesis; 5-aminolevulinate from L-glutamyl-tRNA(Glu): step 2/2. This chain is Glutamate-1-semialdehyde 2,1-aminomutase, found in Pectobacterium carotovorum subsp. carotovorum (strain PC1).